Reading from the N-terminus, the 583-residue chain is Afadin- and alpha-actinin-binding protein (583 aa).

Coiled coils occupy residues 108-220, 255-333, and 420-453; these read NNVE…LAIE, DYEA…QLTN, and EEKE…AIRL. The segment at 285–328 is disordered; sequence LSPCPPLNRGGSAEESQELGDSDREERSAETSRETLDQSCEHAR. The segment covering 305-328 has biased composition (basic and acidic residues); the sequence is DSDREERSAETSRETLDQSCEHAR. A disordered region spans residues 480–527; that stretch reads DRMRSSSSDGQSALSVKSEPEIRTSSSKAPPVKSSAYTTFSTPKSSKS. A compositionally biased stretch (polar residues) spans 484–494; that stretch reads SSSSDGQSALS. The span at 504 to 515 shows a compositional bias: low complexity; that stretch reads SSSKAPPVKSSA. Residues 516-527 are compositionally biased toward polar residues; the sequence is YTTFSTPKSSKS.

The protein belongs to the ADIP family.

It is found in the cell junction. Its subcellular location is the adherens junction. The protein localises to the cytoplasm. The protein resides in the cytoskeleton. It localises to the microtubule organizing center. It is found in the centrosome. Its subcellular location is the centriolar satellite. Belongs to an adhesion system, which plays a role in the organization of homotypic, interneuronal and heterotypic cell-cell adherens junctions (AJs). Involved in cell movement. Acts as a centrosome maturation factor, probably by maintaining the integrity of the pericentriolar material and proper microtubule nucleation at mitotic spindle poles. The polypeptide is Afadin- and alpha-actinin-binding protein (ssx2ip) (Oryzias latipes (Japanese rice fish)).